Consider the following 438-residue polypeptide: UDP-N-acetylmuramoylalanine--D-glutamate ligase (438 aa).

Residue 105-111 (GSNGKTT) participates in ATP binding.

It belongs to the MurCDEF family.

The protein localises to the cytoplasm. The catalysed reaction is UDP-N-acetyl-alpha-D-muramoyl-L-alanine + D-glutamate + ATP = UDP-N-acetyl-alpha-D-muramoyl-L-alanyl-D-glutamate + ADP + phosphate + H(+). It functions in the pathway cell wall biogenesis; peptidoglycan biosynthesis. Functionally, cell wall formation. Catalyzes the addition of glutamate to the nucleotide precursor UDP-N-acetylmuramoyl-L-alanine (UMA). This chain is UDP-N-acetylmuramoylalanine--D-glutamate ligase, found in Oenococcus oeni (strain ATCC BAA-331 / PSU-1).